The following is a 378-amino-acid chain: Putative dioxygenase VC_1345 (378 aa).

3 residues coordinate Fe cation: histidine 288, aspartate 294, and histidine 324.

The protein belongs to the homogentisate dioxygenase family. Fe cation is required as a cofactor.

The chain is Putative dioxygenase VC_1345 from Vibrio cholerae serotype O1 (strain ATCC 39315 / El Tor Inaba N16961).